A 116-amino-acid polypeptide reads, in one-letter code: Dynein light chain Tctex-type 3 (116 aa).

A 3'-nitrotyrosine modification is found at Tyr-4.

This sequence belongs to the dynein light chain Tctex-type family. In terms of assembly, homodimer. The cytoplasmic dynein 1 complex consists of two catalytic heavy chains (HCs) and a number of non-catalytic subunits presented by intermediate chains (ICs), light intermediate chains (LICs) and light chains (LCs); the composition seems to vary in respect to the IC, LIC and LC composition. The heavy chain homodimer serves as a scaffold for the probable homodimeric assembly of the respective non-catalytic subunits. The ICs and LICs bind directly to the HC dimer and the LCs assemble on the IC dimer. DYNLT1 and DYNLT3 compete for association with dynein IC (DYNC1I1 or DYNC1I2). Self-associates. Interacts with DYNC1I1 and DYNC1I2. Interacts with BUB3. Interacts with SATB1 in nucleus to form complex with matrix attachment regions (MARs) of DNA.

The protein resides in the nucleus. It localises to the cytoplasm. It is found in the cytoskeleton. Its subcellular location is the chromosome. The protein localises to the centromere. The protein resides in the kinetochore. Its function is as follows. Acts as one of several non-catalytic accessory components of the cytoplasmic dynein 1 complex that are thought to be involved in linking dynein to cargos and to adapter proteins that regulate dynein function. Cytoplasmic dynein 1 acts as a motor for the intracellular retrograde motility of vesicles and organelles along microtubules. Probably binds BUB3 as part of transport cargo. Required for the efficient progression through mitosis. The polypeptide is Dynein light chain Tctex-type 3 (Dynlt3) (Mus musculus (Mouse)).